The following is a 154-amino-acid chain: 6,7-dimethyl-8-ribityllumazine synthase (154 aa).

Residues phenylalanine 22, 56 to 58, and 81 to 83 contribute to the 5-amino-6-(D-ribitylamino)uracil site; these read AFE and VLI. 86–87 is a binding site for (2S)-2-hydroxy-3-oxobutyl phosphate; the sequence is ET. Histidine 89 functions as the Proton donor in the catalytic mechanism. Phenylalanine 114 is a binding site for 5-amino-6-(D-ribitylamino)uracil. Arginine 128 contacts (2S)-2-hydroxy-3-oxobutyl phosphate.

This sequence belongs to the DMRL synthase family.

It carries out the reaction (2S)-2-hydroxy-3-oxobutyl phosphate + 5-amino-6-(D-ribitylamino)uracil = 6,7-dimethyl-8-(1-D-ribityl)lumazine + phosphate + 2 H2O + H(+). The protein operates within cofactor biosynthesis; riboflavin biosynthesis; riboflavin from 2-hydroxy-3-oxobutyl phosphate and 5-amino-6-(D-ribitylamino)uracil: step 1/2. Its function is as follows. Catalyzes the formation of 6,7-dimethyl-8-ribityllumazine by condensation of 5-amino-6-(D-ribitylamino)uracil with 3,4-dihydroxy-2-butanone 4-phosphate. This is the penultimate step in the biosynthesis of riboflavin. The polypeptide is 6,7-dimethyl-8-ribityllumazine synthase (Chlamydia abortus (strain DSM 27085 / S26/3) (Chlamydophila abortus)).